A 309-amino-acid polypeptide reads, in one-letter code: Ribonuclease Z (309 aa).

H63, H65, D67, H68, H145, D216, and H274 together coordinate Zn(2+). Catalysis depends on D67, which acts as the Proton acceptor.

The protein belongs to the RNase Z family. As to quaternary structure, homodimer. The cofactor is Zn(2+).

It catalyses the reaction Endonucleolytic cleavage of RNA, removing extra 3' nucleotides from tRNA precursor, generating 3' termini of tRNAs. A 3'-hydroxy group is left at the tRNA terminus and a 5'-phosphoryl group is left at the trailer molecule.. In terms of biological role, zinc phosphodiesterase, which displays some tRNA 3'-processing endonuclease activity. Probably involved in tRNA maturation, by removing a 3'-trailer from precursor tRNA. This chain is Ribonuclease Z, found in Streptococcus suis (strain 98HAH33).